Here is a 1595-residue protein sequence, read N- to C-terminus: Pentafunctional AROM polypeptide (1595 aa).

Residues 1–384 (MGVPTKISIL…HEPRASTVSN (384 aa)) are 3-dehydroquinate synthase. Residues 44–46 (DTN), 81–84 (ESSK), 114–116 (GGV), and D119 contribute to the NAD(+) site. R130 serves as a coordination point for 7-phospho-2-dehydro-3-deoxy-D-arabino-heptonate. 139–140 (TT) provides a ligand contact to NAD(+). 7-phospho-2-dehydro-3-deoxy-D-arabino-heptonate-binding residues include D146 and K152. Residue K161 participates in NAD(+) binding. N162 is a binding site for 7-phospho-2-dehydro-3-deoxy-D-arabino-heptonate. Residues 179–182 (FLNT) and N190 contribute to the NAD(+) site. E194 provides a ligand contact to Zn(2+). Residues 194–197 (EVIK) and K250 each bind 7-phospho-2-dehydro-3-deoxy-D-arabino-heptonate. Residue E260 is the Proton acceptor; for 3-dehydroquinate synthase activity of the active site. 7-phospho-2-dehydro-3-deoxy-D-arabino-heptonate contacts are provided by residues 264-268 (RNLLN) and H271. Residue H271 participates in Zn(2+) binding. H275 (proton acceptor; for 3-dehydroquinate synthase activity) is an active-site residue. 7-phospho-2-dehydro-3-deoxy-D-arabino-heptonate contacts are provided by H287 and K356. A Zn(2+)-binding site is contributed by H287. Residues 397-842 (VSPGVPKGLD…WDSLAQTFKV (446 aa)) form an EPSP synthase region. The For EPSP synthase activity role is filled by C824. A shikimate kinase region spans residues 866 to 1057 (ASIFIIGMRG…RRKENTFFVS (192 aa)). 872–879 (GMRGAGKT) is a binding site for ATP. A 3-dehydroquinase region spans residues 1058-1278 (LTLPDLGLAA…AAPGQLSARE (221 aa)). H1181 acts as the Proton acceptor; for 3-dehydroquinate dehydratase activity in catalysis. Catalysis depends on K1209, which acts as the Schiff-base intermediate with substrate; for 3-dehydroquinate dehydratase activity. The shikimate dehydrogenase stretch occupies residues 1291–1595 (AKKFAVIGNP…MGVLPSEDIS (305 aa)).

The protein in the N-terminal section; belongs to the sugar phosphate cyclases superfamily. Dehydroquinate synthase family. This sequence in the 2nd section; belongs to the EPSP synthase family. In the 3rd section; belongs to the shikimate kinase family. It in the 4th section; belongs to the type-I 3-dehydroquinase family. The protein in the C-terminal section; belongs to the shikimate dehydrogenase family. Homodimer. Zn(2+) serves as cofactor.

The protein localises to the cytoplasm. It catalyses the reaction 7-phospho-2-dehydro-3-deoxy-D-arabino-heptonate = 3-dehydroquinate + phosphate. The catalysed reaction is 3-dehydroquinate = 3-dehydroshikimate + H2O. It carries out the reaction shikimate + NADP(+) = 3-dehydroshikimate + NADPH + H(+). The enzyme catalyses shikimate + ATP = 3-phosphoshikimate + ADP + H(+). It catalyses the reaction 3-phosphoshikimate + phosphoenolpyruvate = 5-O-(1-carboxyvinyl)-3-phosphoshikimate + phosphate. Its pathway is metabolic intermediate biosynthesis; chorismate biosynthesis; chorismate from D-erythrose 4-phosphate and phosphoenolpyruvate: step 2/7. The protein operates within metabolic intermediate biosynthesis; chorismate biosynthesis; chorismate from D-erythrose 4-phosphate and phosphoenolpyruvate: step 3/7. It participates in metabolic intermediate biosynthesis; chorismate biosynthesis; chorismate from D-erythrose 4-phosphate and phosphoenolpyruvate: step 4/7. It functions in the pathway metabolic intermediate biosynthesis; chorismate biosynthesis; chorismate from D-erythrose 4-phosphate and phosphoenolpyruvate: step 5/7. Its pathway is metabolic intermediate biosynthesis; chorismate biosynthesis; chorismate from D-erythrose 4-phosphate and phosphoenolpyruvate: step 6/7. In terms of biological role, the AROM polypeptide catalyzes 5 consecutive enzymatic reactions in prechorismate polyaromatic amino acid biosynthesis. The sequence is that of Pentafunctional AROM polypeptide from Ajellomyces capsulatus (strain H143) (Darling's disease fungus).